The chain runs to 192 residues: Fe/S biogenesis protein NfuA (192 aa).

Residues C149 and C152 each contribute to the [4Fe-4S] cluster site.

The protein belongs to the NfuA family. Homodimer. The cofactor is [4Fe-4S] cluster.

Involved in iron-sulfur cluster biogenesis. Binds a 4Fe-4S cluster, can transfer this cluster to apoproteins, and thereby intervenes in the maturation of Fe/S proteins. Could also act as a scaffold/chaperone for damaged Fe/S proteins. This chain is Fe/S biogenesis protein NfuA, found in Aeromonas hydrophila subsp. hydrophila (strain ATCC 7966 / DSM 30187 / BCRC 13018 / CCUG 14551 / JCM 1027 / KCTC 2358 / NCIMB 9240 / NCTC 8049).